The primary structure comprises 686 residues: tRNA (guanine(37)-N(1))-methyltransferase (686 aa).

Residues 206-244 (GGPSSVSLTEDTDGSEQPQGLPRAAAAPPPPSNKRRASY) form a disordered region. Residues histidine 428, 466–467 (DL), 495–496 (DG), and asparagine 530 each bind S-adenosyl-L-methionine.

Belongs to the class I-like SAM-binding methyltransferase superfamily. TRM5/TYW2 family. As to quaternary structure, monomer.

The protein resides in the mitochondrion matrix. The protein localises to the nucleus. It is found in the cytoplasm. It catalyses the reaction guanosine(37) in tRNA + S-adenosyl-L-methionine = N(1)-methylguanosine(37) in tRNA + S-adenosyl-L-homocysteine + H(+). Specifically methylates the N1 position of guanosine-37 in various cytoplasmic and mitochondrial tRNAs. Methylation is not dependent on the nature of the nucleoside 5' of the target nucleoside. This is the first step in the biosynthesis of wybutosine (yW), a modified base adjacent to the anticodon of tRNAs and required for accurate decoding. The polypeptide is tRNA (guanine(37)-N(1))-methyltransferase (Leishmania major).